The following is a 381-amino-acid chain: 1-deoxy-D-xylulose 5-phosphate reductoisomerase (381 aa).

5 residues coordinate NADPH: threonine 10, glycine 11, serine 12, isoleucine 13, and asparagine 120. 1-deoxy-D-xylulose 5-phosphate is bound at residue lysine 121. Glutamate 122 lines the NADPH pocket. Aspartate 146 provides a ligand contact to Mn(2+). The 1-deoxy-D-xylulose 5-phosphate site is built by serine 147, glutamate 148, serine 172, and histidine 195. Glutamate 148 provides a ligand contact to Mn(2+). Position 201 (glycine 201) interacts with NADPH. Positions 208, 213, 214, and 217 each coordinate 1-deoxy-D-xylulose 5-phosphate. A Mn(2+)-binding site is contributed by glutamate 217.

The protein belongs to the DXR family. Mg(2+) serves as cofactor. Mn(2+) is required as a cofactor.

The catalysed reaction is 2-C-methyl-D-erythritol 4-phosphate + NADP(+) = 1-deoxy-D-xylulose 5-phosphate + NADPH + H(+). It participates in isoprenoid biosynthesis; isopentenyl diphosphate biosynthesis via DXP pathway; isopentenyl diphosphate from 1-deoxy-D-xylulose 5-phosphate: step 1/6. In terms of biological role, catalyzes the NADPH-dependent rearrangement and reduction of 1-deoxy-D-xylulose-5-phosphate (DXP) to 2-C-methyl-D-erythritol 4-phosphate (MEP). This Thermodesulfovibrio yellowstonii (strain ATCC 51303 / DSM 11347 / YP87) protein is 1-deoxy-D-xylulose 5-phosphate reductoisomerase.